The primary structure comprises 883 residues: Pre-mRNA-splicing factor syf1 homolog (883 aa).

HAT repeat units lie at residues 13-45 (INFE…HKAK), 46-78 (APNN…TRRK), 88-120 (PMYE…FMTS), 122-156 (CKIT…FVRR), 158-190 (EMPE…EADR), 268-303 (GLFD…FEEL), 368-406 (DKPA…FYEA), 463-495 (KRKI…LEES), 531-565 (NYFE…KFLE), 570-604 (TKLE…LEEE), 642-676 (YGLP…LETK), and 678-712 (GEVD…FEVR). Disordered regions lie at residues 794 to 851 (RGET…DEEG) and 864 to 883 (IPAK…SDGE). Residues 812–834 (DEIDIGDSDEDDEEEDDDEENEM) show a composition bias toward acidic residues. 2 stretches are compositionally biased toward polar residues: residues 835-844 (TNENQASAAV) and 873-883 (KPSNQGDSDGE).

Belongs to the crooked-neck family. In terms of assembly, component of the NTC(Nineteen)/Prp19 complex composed of at least fand, Prp19,CG9667/ISY1 and Cdc5/CDC5L. Within the complex, interacts with Prp19 and ISY1/CG9667.

The protein localises to the nucleus. Functionally, subunit of the NTC(Nineteen)/Prp19 complex, which is part of the spliceosome. The complex participates in spliceosome assembly, its remodeling and is required for efficient spliceosome activation. Essential for efficient pre-mRNA splicing. In embryos, efficient pre-mRNA splicing of zygotic transcripts is essential during dynamic cellular processes that require rapid division and/or dramatic changes in gene expression such as blastoderm cellularization, tracheal branching morphogenesis, Malpighian morphogenesis and epidermal development. Part of its role in promoting embryo tracheal development is also due to specifically splicing bnl transcripts which results in the activation of the BNL-FGF pathway. In Drosophila melanogaster (Fruit fly), this protein is Pre-mRNA-splicing factor syf1 homolog.